The primary structure comprises 259 residues: Putative carbamate hydrolase RutD (259 aa).

It belongs to the AB hydrolase superfamily. Hydrolase RutD family.

The catalysed reaction is carbamate + 2 H(+) = NH4(+) + CO2. Its function is as follows. Involved in pyrimidine catabolism. May facilitate the hydrolysis of carbamate, a reaction that can also occur spontaneously. The polypeptide is Putative carbamate hydrolase RutD (Pseudomonas savastanoi pv. phaseolicola (strain 1448A / Race 6) (Pseudomonas syringae pv. phaseolicola (strain 1448A / Race 6))).